The chain runs to 161 residues: ATP synthase subunit b (161 aa).

A helical membrane pass occupies residues 11 to 31 (AISFVLFVWFCMKYIWPPIIL).

The protein belongs to the ATPase B chain family. As to quaternary structure, F-type ATPases have 2 components, F(1) - the catalytic core - and F(0) - the membrane proton channel. F(1) has five subunits: alpha(3), beta(3), gamma(1), delta(1), epsilon(1). F(0) has three main subunits: a(1), b(2) and c(10-14). The alpha and beta chains form an alternating ring which encloses part of the gamma chain. F(1) is attached to F(0) by a central stalk formed by the gamma and epsilon chains, while a peripheral stalk is formed by the delta and b chains.

It is found in the cell membrane. Functionally, f(1)F(0) ATP synthase produces ATP from ADP in the presence of a proton or sodium gradient. F-type ATPases consist of two structural domains, F(1) containing the extramembraneous catalytic core and F(0) containing the membrane proton channel, linked together by a central stalk and a peripheral stalk. During catalysis, ATP synthesis in the catalytic domain of F(1) is coupled via a rotary mechanism of the central stalk subunits to proton translocation. Its function is as follows. Component of the F(0) channel, it forms part of the peripheral stalk, linking F(1) to F(0). The protein is ATP synthase subunit b of Buchnera aphidicola subsp. Acyrthosiphon pisum (strain APS) (Acyrthosiphon pisum symbiotic bacterium).